The primary structure comprises 212 residues: Phosphoribosylglycinamide formyltransferase (212 aa).

A N(1)-(5-phospho-beta-D-ribosyl)glycinamide-binding site is contributed by 12-14 (GTN). Residues 90–93 (MKIL) and Asn107 each bind (6R)-10-formyltetrahydrofolate. The active-site Proton donor is His109.

Belongs to the GART family.

It carries out the reaction N(1)-(5-phospho-beta-D-ribosyl)glycinamide + (6R)-10-formyltetrahydrofolate = N(2)-formyl-N(1)-(5-phospho-beta-D-ribosyl)glycinamide + (6S)-5,6,7,8-tetrahydrofolate + H(+). It participates in purine metabolism; IMP biosynthesis via de novo pathway; N(2)-formyl-N(1)-(5-phospho-D-ribosyl)glycinamide from N(1)-(5-phospho-D-ribosyl)glycinamide (10-formyl THF route): step 1/1. Catalyzes the transfer of a formyl group from 10-formyltetrahydrofolate to 5-phospho-ribosyl-glycinamide (GAR), producing 5-phospho-ribosyl-N-formylglycinamide (FGAR) and tetrahydrofolate. In Haemophilus influenzae (strain ATCC 51907 / DSM 11121 / KW20 / Rd), this protein is Phosphoribosylglycinamide formyltransferase.